A 125-amino-acid chain; its full sequence is Calcitonin receptor-stimulating peptide 1 (125 aa).

Residues 1 to 25 (MGFWKFPPFLVLSILVLYQAGMFHA) form the signal peptide. A propeptide spanning residues 26–77 (APFRSVFDGRFDPATLDEEESRLLLAAMVNDYEQMRTRESEKAQKTEGSRIQ) is cleaved from the precursor. A disulfide bond links Cys81 and Cys86.

It belongs to the calcitonin family.

It localises to the secreted. Functionally, stimulates cAMP production via the calcitonin receptor (CT) but not via the CT-like (CL) receptor. This is Calcitonin receptor-stimulating peptide 1 (CRSP1) from Ovis aries (Sheep).